We begin with the raw amino-acid sequence, 303 residues long: Sodium/potassium-transporting ATPase subunit beta-1 (303 aa).

At 1-34 (MPAATKDSDGGWKKFLWNSEKKEFLGRTGGSWAK) the chain is on the cytoplasmic side. The helical; Signal-anchor for type II membrane protein transmembrane segment at 35–55 (ILLFYVIFYGCLAGIFIGTIQ) threads the bilayer. The Extracellular segment spans residues 56–303 (ALLLTINDFK…FDVKFTINES (248 aa)). The N-linked (GlcNAc...) asparagine glycan is linked to Asn-113. Cystine bridges form between Cys-126–Cys-149 and Cys-159–Cys-175. 2 N-linked (GlcNAc...) asparagine glycosylation sites follow: Asn-194 and Asn-264. The cysteines at positions 214 and 275 are disulfide-linked.

The protein belongs to the X(+)/potassium ATPases subunit beta family. As to quaternary structure, the sodium/potassium-transporting ATPase is composed of a catalytic alpha subunit, an auxiliary non-catalytic beta subunit and an additional regulatory subunit. Detected in all tissues except liver and cardiac muscle. Highest levels found in intestine, ovary and kidney with marginally lower levels in brain, spleen, esophagus, eye and pancreas, intermediate levels in gill and low levels in white and red skeletal muscle.

The protein localises to the cell membrane. Functionally, this is the non-catalytic component of the active enzyme, which catalyzes the hydrolysis of ATP coupled with the exchange of Na(+) and K(+) ions across the plasma membrane. The beta subunit regulates, through assembly of alpha/beta heterodimers, the number of sodium pumps transported to the plasma membrane. This chain is Sodium/potassium-transporting ATPase subunit beta-1 (atp1b1), found in Anguilla anguilla (European freshwater eel).